The following is a 246-amino-acid chain: Orotidine 5'-phosphate decarboxylase (246 aa).

Substrate contacts are provided by residues Asp22, Lys44, 71 to 80, Thr131, Arg192, Gln201, Gly221, and Arg222; that span reads DLKFHDIPNT. Lys73 acts as the Proton donor in catalysis.

This sequence belongs to the OMP decarboxylase family. Type 1 subfamily. In terms of assembly, homodimer.

The catalysed reaction is orotidine 5'-phosphate + H(+) = UMP + CO2. It participates in pyrimidine metabolism; UMP biosynthesis via de novo pathway; UMP from orotate: step 2/2. Its function is as follows. Catalyzes the decarboxylation of orotidine 5'-monophosphate (OMP) to uridine 5'-monophosphate (UMP). This Enterobacter sp. (strain 638) protein is Orotidine 5'-phosphate decarboxylase.